The sequence spans 219 residues: Dynein light chain Tctex-type 4 (219 aa).

The disordered stretch occupies residues 1-84 (MAGRPVPAGR…RRPSLGPVPP (84 aa)). Over residues 10–20 (RQEEELAKDPG) the composition is skewed to basic and acidic residues. Ser64 carries the post-translational modification Phosphoserine.

Belongs to the dynein light chain Tctex-type family. Interacts with ENG/endoglin, TGFBR2 and TGFBR3. Interacts with PPP1CC.

The protein localises to the cell projection. It is found in the cilium. Its subcellular location is the flagellum. The protein resides in the cytoplasmic vesicle. It localises to the secretory vesicle. The protein localises to the acrosome. It is found in the cytoplasm. Its subcellular location is the cytoskeleton. The protein resides in the cilium axoneme. It localises to the nucleus. The protein localises to the microtubule organizing center. This chain is Dynein light chain Tctex-type 4 (DYNLT4), found in Sus scrofa (Pig).